The chain runs to 203 residues: GTP-binding protein yptV1 (203 aa).

Residues 15-23 (GDSGVGKSC), 33-40 (YTESYIST), 63-67 (DTAGQ), 121-124 (NKSD), and 151-153 (SAK) contribute to the GTP site. An Effector region motif is present at residues 37–45 (YISTIGVDF). Positions 173–203 (MASQPVPPKPGGPVVRPTEGKPINNKSSSCC) are disordered. 2 S-geranylgeranyl cysteine lipidation sites follow: cysteine 202 and cysteine 203.

It belongs to the small GTPase superfamily. Rab family.

The protein localises to the cell membrane. Protein transport. Probably involved in vesicular traffic. This is GTP-binding protein yptV1 (YPTV1) from Volvox carteri (Green alga).